The following is a 195-amino-acid chain: Probable nicotinate-nucleotide adenylyltransferase (195 aa).

It belongs to the NadD family.

It carries out the reaction nicotinate beta-D-ribonucleotide + ATP + H(+) = deamido-NAD(+) + diphosphate. The protein operates within cofactor biosynthesis; NAD(+) biosynthesis; deamido-NAD(+) from nicotinate D-ribonucleotide: step 1/1. Its function is as follows. Catalyzes the reversible adenylation of nicotinate mononucleotide (NaMN) to nicotinic acid adenine dinucleotide (NaAD). This chain is Probable nicotinate-nucleotide adenylyltransferase, found in Opitutus terrae (strain DSM 11246 / JCM 15787 / PB90-1).